Consider the following 902-residue polypeptide: Cytosolic 10-formyltetrahydrofolate dehydrogenase (902 aa).

A hydrolase domain region spans residues 1 to 310; sequence MKIAVIGQSL…PASQYYKTAD (310 aa). Residue 88–90 participates in (6R)-10-formyltetrahydrofolate binding; sequence QFI. H106 acts as the Proton donor in catalysis. D142 contacts (6R)-10-formyltetrahydrofolate. A Carrier domain is found at 318–395; that stretch reads DEEKKFSEEI…EFIQMVVRRL (78 aa). Residue S354 is modified to O-(pantetheine 4'-phosphoryl)serine. The tract at residues 417 to 902 is aldehyde dehydrogenase domain; the sequence is TVKIPHQLFI…LKTKAVTIEY (486 aa). NADP(+) is bound by residues 571–573, 597–600, 630–635, 650–651, and 673–674; these read IPW, KPAQ, GSLIGQ, GS, and EL. E673 (proton acceptor) is an active-site residue. C707 acts as the Proton donor in catalysis. Residues K757 and 804 to 806 each bind NADP(+); that span reads ESF.

It in the N-terminal section; belongs to the GART family. The protein in the C-terminal section; belongs to the aldehyde dehydrogenase family. ALDH1L subfamily. Homotetramer. Post-translationally, phosphopantetheinylation at Ser-354 by AASDHPPT is required for the formyltetrahydrofolate dehydrogenase activity.

The protein resides in the cytoplasm. It is found in the cytosol. The enzyme catalyses (6R)-10-formyltetrahydrofolate + NADP(+) + H2O = (6S)-5,6,7,8-tetrahydrofolate + CO2 + NADPH + H(+). In terms of biological role, cytosolic 10-formyltetrahydrofolate dehydrogenase that catalyzes the NADP(+)-dependent conversion of 10-formyltetrahydrofolate to tetrahydrofolate and carbon dioxide. May also have an NADP(+)-dependent aldehyde dehydrogenase activity towards formaldehyde, acetaldehyde, propionaldehyde, and benzaldehyde. Regulates reduced folate pools as well as glycine metabolism. The chain is Cytosolic 10-formyltetrahydrofolate dehydrogenase (aldh1l1) from Xenopus tropicalis (Western clawed frog).